A 144-amino-acid chain; its full sequence is Nucleoside diphosphate kinase (144 aa).

ATP is bound by residues Lys-11, Phe-59, Arg-87, Thr-93, Arg-104, and Asn-114. The active-site Pros-phosphohistidine intermediate is the His-117.

This sequence belongs to the NDK family. In terms of assembly, homotetramer. Mg(2+) serves as cofactor.

It is found in the cytoplasm. It catalyses the reaction a 2'-deoxyribonucleoside 5'-diphosphate + ATP = a 2'-deoxyribonucleoside 5'-triphosphate + ADP. The catalysed reaction is a ribonucleoside 5'-diphosphate + ATP = a ribonucleoside 5'-triphosphate + ADP. Its function is as follows. Major role in the synthesis of nucleoside triphosphates other than ATP. The ATP gamma phosphate is transferred to the NDP beta phosphate via a ping-pong mechanism, using a phosphorylated active-site intermediate. The sequence is that of Nucleoside diphosphate kinase from Vibrio atlanticus (strain LGP32) (Vibrio splendidus (strain Mel32)).